The sequence spans 570 residues: Ferroportin (570 aa).

The Cytoplasmic segment spans residues 1-23 (MTKSRDQTHQEGCCGSLANYLTS). Residues 24-53 (AKFLLYLGHSLSTWGDRMWHFAVSVFLVEL) traverse the membrane as a helical segment. Fe cation contacts are provided by D39 and H43. Residues 54–57 (YGNS) are Extracellular-facing. A helical transmembrane segment spans residues 58 to 84 (LLLTAVYGLVVAGSVLVLGAIIGDWVD). Topologically, residues 85 to 87 (KNA) are cytoplasmic. The chain crosses the membrane as a helical span at residues 88–118 (RLKVAQTSLVVQNVSVILCGIILMMVFLHKN). Over 119 to 126 (ELLNMYHG) the chain is Extracellular. A helical membrane pass occupies residues 127 to 162 (WVLTVCYILIITIANIANLASTATAITIQRDWIVVV). At 163–164 (AG) the chain is on the cytoplasmic side. The helical transmembrane segment at 165 to 195 (ENRSRLADMNATIRRIDQLTNILAPMAVGQI) threads the bilayer. Residues 196–202 (MTFGSPV) are Extracellular-facing. The chain crosses the membrane as a helical span at residues 203-229 (IGCGFISGWNLVSMCVEYFLLWKVYQK). Residues 230 to 306 (TPALAVKAAL…DGWVSYYNQP (77 aa)) are Cytoplasmic-facing. Residues 307–333 (VFLAGMGLAFLYMTVLGFDCITTGYAY) traverse the membrane as a helical segment. C326 contributes to the Fe cation binding site. The Extracellular segment spans residues 334–338 (TQGLS). The chain crosses the membrane as a helical span at residues 339 to 366 (GSILSVLMGASAITGIMGTVAFTWLRRK). Topologically, residues 367–368 (CG) are cytoplasmic. A helical membrane pass occupies residues 369–391 (LVRTGLFSGLAQLSCLILCVISV). At 392–452 (FMPGSPLDLS…EMSTKSVPII (61 aa)) the chain is on the extracellular side. Residues 453–482 (SVSLLFAGVIAARIGLWSFDLTVTQLLQEN) traverse the membrane as a helical segment. Residues 483-487 (VIESE) are Cytoplasmic-facing. Residues 488 to 512 (RGIINGVQNSMNYLLDLLHFIMVIL) form a helical membrane-spanning segment. H506 is a binding site for Fe cation. At 513-515 (APN) the chain is on the extracellular side. A helical transmembrane segment spans residues 516–541 (PEAFGLLVLISVSFVAMGHLMYFRFA). The Cytoplasmic segment spans residues 542-570 (QKTLGNQIFVCAPDEKEVTDESQPNTSVV).

Belongs to the ferroportin (FP) (TC 2.A.100) family. SLC40A subfamily. As to quaternary structure, identified in a complex with STOM. Interacts with HAMP; affinity of the peptide hormone HAMP for SLC40A1 increases by 80-fold in the presence of iron and the interaction promotes SLC40A1 ubiquitination and degradation. Part of a complex composed of SLC40A1/ferroportin, TF/transferrin and HEPH/hephaestin that transfers iron from cells to transferrin. In terms of processing, polyubiquitinated by RNF217; leading to proteasomal degradation. Under conditions of high systemic iron levels, both the hormone peptide hepcidin/HAMP and holo(iron bound)-transferrin/TF induce the ubiquitination, internalization and proteasomal degradation of SLC40A1 to control iron release from cells.

It localises to the cell membrane. It is found in the basolateral cell membrane. It catalyses the reaction Fe(2+)(in) = Fe(2+)(out). During elevated serum iron levels, liver-derived hepcidin/HAMP negatively regulates cell surface SLC40A1 by inducing its ubiquitination, internalization, and degradation. Indeed, hepcidin/HAMP affinity towards ferroportin/SLC40A1 increases by 80-fold in the presence of iron. In terms of biological role, transports Fe(2+) from the inside of a cell to the outside of the cell, playing a key role for maintaining systemic iron homeostasis. Transports iron from intestinal, splenic, hepatic cells, macrophages and erythrocytes into the blood to provide iron to other tissues. Controls therefore dietary iron uptake, iron recycling by macrophages and erythrocytes, and release of iron stores in hepatocytes. When iron is in excess in serum, circulating HAMP/hepcidin levels increase resulting in a degradation of SLC40A1, thus limiting the iron efflux to plasma. In Rattus norvegicus (Rat), this protein is Ferroportin.